A 239-amino-acid chain; its full sequence is Increased recombination centers protein 22-2 (239 aa).

An N-terminal signal peptide occupies residues 1 to 19 (MKLSTIFTAFAATIATVAG). Over 20–161 (YETTGSKQTV…AAVSFFDPRL (142 aa)) the chain is Lumenal. A helical transmembrane segment spans residues 162–182 (IFLELVLLITFAGLIYVGYEI). The Cytoplasmic portion of the chain corresponds to 183–239 (WGKQYFKGVAPVKAKKVSAAKASSPVATGPSTTSATGYDTNWIPESHLKQKKTKKVN). The interval 202 to 222 (AKASSPVATGPSTTSATGYDT) is disordered. Positions 211–221 (GPSTTSATGYD) are enriched in polar residues.

It belongs to the IRC22 family.

The protein resides in the endoplasmic reticulum membrane. In terms of biological role, is probably involved in a pathway contributing to genomic integrity. The sequence is that of Increased recombination centers protein 22-2 (IRC22-2) from Candida albicans (strain SC5314 / ATCC MYA-2876) (Yeast).